A 170-amino-acid chain; its full sequence is Cathelicidin antimicrobial peptide (170 aa).

The signal sequence occupies residues 1–30; it reads MKTQRDGPSLGRWSLVLLLLGLTMPLAITA. The propeptide at 31–131 is cathelin-like domain (CLD); that stretch reads QVLSYQEAVL…DISCDKDERK (101 aa). Cystine bridges form between C86–C97 and C108–C125. Positions 150 to 162 are active core; sequence FKKIGQKINDFLG.

It belongs to the cathelicidin family. In terms of assembly, monomer, homodimer or homotrimer (in vitro). Oligomerizes as tetra- or hexamer in solution (in vitro). Post-translationally, proteolytically cleaved by proteinase PRTN3 into antibacterial peptide LL-37. Proteolytically cleaved by cathepsin CTSG and neutrophil elastase ELANE. In terms of processing, resistant to proteolytic degradation in solution, and when bound to both zwitterionic (mimicking mammalian membranes) and negatively charged membranes (mimicking bacterial membranes). After secretion onto the skin surface, the CAMP gene product is processed by a serine protease-dependent mechanism into multiple novel antimicrobial peptides distinct from and shorter than cathelicidin LL-37. These peptides show enhanced antimicrobial action, acquiring the ability to kill skin pathogens such as S.aureus, E.coli and C.albicans. These peptides have lost the ability to stimulate CXCL8/IL8 release from keratinocytes. The peptides act synergistically, killing bacteria at lower concentrations when present together, and maintain activity at increased salt condition.

Its subcellular location is the secreted. It is found in the vesicle. In terms of biological role, antimicrobial protein that is an integral component of the innate immune system. Binds to bacterial lipopolysaccharides (LPS). Acts via neutrophil N-formyl peptide receptors to enhance the release of CXCL2. Postsecretory processing generates multiple cathelicidin antimicrobial peptides with various lengths which act as a topical antimicrobial defense in sweat on skin. The unprocessed precursor form, cathelicidin antimicrobial peptide, inhibits the growth of Gram-negative E.coli and E.aerogenes with efficiencies comparable to that of the mature peptide LL-37 (in vitro). Functionally, antimicrobial peptide that is an integral component of the innate immune system. Binds to bacterial lipopolysaccharides (LPS). Causes membrane permeabilization by forming transmembrane pores (in vitro). Causes lysis of E.coli. Exhibits antimicrobial activity against Gram-negative bacteria such as P.aeruginosa, S.typhimurium, E.aerogenes, E.coli and P.syringae, Gram-positive bacteria such as L.monocytogenes, S.epidermidis, S.pyogenes and S.aureus, as well as vancomycin-resistant enterococci (in vitro). Exhibits antimicrobial activity against methicillin-resistant S.aureus, P.mirabilis, and C.albicans in low-salt media, but not in media containing 100 mM NaCl (in vitro). Forms chiral supramolecular assemblies with quinolone signal (PQS) molecules of P.aeruginosa, which may lead to interference of bacterial quorum signaling and perturbance of bacterial biofilm formation. May form supramolecular fiber-like assemblies on bacterial membranes. Induces cytokine and chemokine producation as well as TNF/TNFA and CSF2/GMCSF production in normal human keratinocytes. Exhibits hemolytic activity against red blood cells. Its function is as follows. Exhibits antimicrobial activity against E.coli and B.megaterium (in vitro). The protein is Cathelicidin antimicrobial peptide of Cebus capucinus (White-faced sapajou).